The primary structure comprises 929 residues: Ribonucleoside-diphosphate reductase large chain (929 aa).

The 92-residue stretch at 1–92 (MYVKKRDGRQ…VSNLHKQTKK (92 aa)) folds into the ATP-cone domain. Residues 5-6 (KR), 11-17 (ERVQFDK), T53, and D57 each bind ATP. S202 and S217 together coordinate GDP. A disulfide bridge connects residues C218 and C444. DTTP-binding positions include 226–228 (DSI), K243, R256, and 263–264 (AG). A GDP-binding site is contributed by N427. The active-site Proton acceptor is N427. Catalysis depends on C429, which acts as the Cysteine radical intermediate. GDP-binding positions include E431 and 605–608 (TAST). E431 acts as the Proton acceptor in catalysis. Positions 789-904 (ENTSGPRPYA…RDENIYSNAP (116 aa)) are disordered. The span at 800-809 (TGVSGTSTPI) shows a compositional bias: polar residues. Over residues 868–884 (VKTEDIGSPLLERKEGQ) the composition is skewed to basic and acidic residues. Over residues 885–894 (NEDVDEDSQE) the composition is skewed to acidic residues.

The protein belongs to the ribonucleoside diphosphate reductase large chain family.

It carries out the reaction a 2'-deoxyribonucleoside 5'-diphosphate + [thioredoxin]-disulfide + H2O = a ribonucleoside 5'-diphosphate + [thioredoxin]-dithiol. Under complex allosteric control mediated by deoxynucleoside triphosphates and ATP binding to separate specificity and activation sites on the large subunit. The type of nucleotide bound at the specificity site determines substrate preference. It seems probable that ATP makes the enzyme reduce CDP and UDP, dGTP favors ADP reduction and dTTP favors GDP reduction. Stimulated by ATP and inhibited by dATP binding to the activity site. Functionally, provides the precursors necessary for DNA synthesis. Catalyzes the biosynthesis of deoxyribonucleotides from the corresponding ribonucleotides. The protein is Ribonucleoside-diphosphate reductase large chain (rnr-1) of Neurospora crassa (strain ATCC 24698 / 74-OR23-1A / CBS 708.71 / DSM 1257 / FGSC 987).